Reading from the N-terminus, the 179-residue chain is Probable F-box protein At3g25550 (179 aa).

Residues 19-55 (IPNDDVLEEIIVRLPVKTLTRFQTVSKHWRHTIKSRN) enclose the F-box domain.

The protein is Probable F-box protein At3g25550 of Arabidopsis thaliana (Mouse-ear cress).